Reading from the N-terminus, the 136-residue chain is Ciliary microtubule inner protein 1 (136 aa).

It is found in the cell projection. The protein resides in the cilium. This chain is Ciliary microtubule inner protein 1 (Cimip1), found in Mus musculus (Mouse).